An 806-amino-acid chain; its full sequence is Phenylalanine--tRNA ligase beta subunit (806 aa).

The region spanning 40–155 (NKGVKGVVVG…SDAEVGADAL (116 aa)) is the tRNA-binding domain. Positions 409 to 484 (VQERTVSVTA…RLYGYDHIPV (76 aa)) constitute a B5 domain. Mg(2+) contacts are provided by D462, D468, E471, and E472. Residues 712–805 (PRFPSMTRDM…VEEKFGAELR (94 aa)) enclose the FDX-ACB domain.

The protein belongs to the phenylalanyl-tRNA synthetase beta subunit family. Type 1 subfamily. As to quaternary structure, tetramer of two alpha and two beta subunits. It depends on Mg(2+) as a cofactor.

The protein localises to the cytoplasm. The enzyme catalyses tRNA(Phe) + L-phenylalanine + ATP = L-phenylalanyl-tRNA(Phe) + AMP + diphosphate + H(+). The protein is Phenylalanine--tRNA ligase beta subunit of Bacillus cereus (strain ZK / E33L).